Reading from the N-terminus, the 320-residue chain is Methylenetetrahydrofolate dehydrogenase [NAD(+)] (320 aa).

C152 is an active-site residue. NAD(+)-binding positions include 187–188 (RS) and 210–211 (DI).

It belongs to the tetrahydrofolate dehydrogenase/cyclohydrolase family. In terms of assembly, homodimer.

It localises to the cytoplasm. It is found in the nucleus. It carries out the reaction (6R)-5,10-methylene-5,6,7,8-tetrahydrofolate + NAD(+) = (6R)-5,10-methenyltetrahydrofolate + NADH. Its pathway is one-carbon metabolism; tetrahydrofolate interconversion. Catalyzes oxidation of cytoplasmic one-carbon units for purine biosynthesis. This Schizosaccharomyces pombe (strain 972 / ATCC 24843) (Fission yeast) protein is Methylenetetrahydrofolate dehydrogenase [NAD(+)] (mtd1).